The primary structure comprises 439 residues: Glucose-1-phosphate adenylyltransferase (439 aa).

Residues Tyr-122, Gly-187, 202-203 (EK), and Ser-220 contribute to the alpha-D-glucose 1-phosphate site.

Belongs to the bacterial/plant glucose-1-phosphate adenylyltransferase family. As to quaternary structure, homotetramer.

It catalyses the reaction alpha-D-glucose 1-phosphate + ATP + H(+) = ADP-alpha-D-glucose + diphosphate. Its pathway is glycan biosynthesis; glycogen biosynthesis. Its function is as follows. Involved in the biosynthesis of ADP-glucose, a building block required for the elongation reactions to produce glycogen. Catalyzes the reaction between ATP and alpha-D-glucose 1-phosphate (G1P) to produce pyrophosphate and ADP-Glc. The sequence is that of Glucose-1-phosphate adenylyltransferase from Thiobacillus denitrificans (strain ATCC 25259 / T1).